The sequence spans 259 residues: Proteasome subunit alpha (259 aa).

The protein belongs to the peptidase T1A family. In terms of assembly, the 20S proteasome core is composed of 14 alpha and 14 beta subunits that assemble into four stacked heptameric rings, resulting in a barrel-shaped structure. The two inner rings, each composed of seven catalytic beta subunits, are sandwiched by two outer rings, each composed of seven alpha subunits. The catalytic chamber with the active sites is on the inside of the barrel. Has a gated structure, the ends of the cylinder being occluded by the N-termini of the alpha-subunits. Is capped at one or both ends by the proteasome regulatory ATPase, PAN.

The protein resides in the cytoplasm. Its activity is regulated as follows. The formation of the proteasomal ATPase PAN-20S proteasome complex, via the docking of the C-termini of PAN into the intersubunit pockets in the alpha-rings, triggers opening of the gate for substrate entry. Interconversion between the open-gate and close-gate conformations leads to a dynamic regulation of the 20S proteasome proteolysis activity. Functionally, component of the proteasome core, a large protease complex with broad specificity involved in protein degradation. The polypeptide is Proteasome subunit alpha (Methanococcus maripaludis (strain C7 / ATCC BAA-1331)).